Reading from the N-terminus, the 331-residue chain is Putative mitochondrial 2-oxoglutarate/malate carrier protein (331 aa).

3 Solcar repeats span residues valine 39 to arginine 128, valine 140 to glutamine 231, and serine 239 to leucine 329. A run of 6 helical transmembrane segments spans residues alanine 42 to isoleucine 62, glycine 103 to cysteine 121, alanine 148 to isoleucine 168, glycine 199 to phenylalanine 219, leucine 245 to valine 265, and tyrosine 309 to leucine 329.

It belongs to the mitochondrial carrier (TC 2.A.29) family.

It localises to the mitochondrion inner membrane. Functionally, catalyzes the transport of 2-oxoglutarate across the inner mitochondrial membrane. This is Putative mitochondrial 2-oxoglutarate/malate carrier protein (mic-33) from Neurospora crassa (strain ATCC 24698 / 74-OR23-1A / CBS 708.71 / DSM 1257 / FGSC 987).